Here is a 246-residue protein sequence, read N- to C-terminus: 3-deoxy-manno-octulosonate cytidylyltransferase (246 aa).

It belongs to the KdsB family.

Its subcellular location is the cytoplasm. The enzyme catalyses 3-deoxy-alpha-D-manno-oct-2-ulosonate + CTP = CMP-3-deoxy-beta-D-manno-octulosonate + diphosphate. The protein operates within nucleotide-sugar biosynthesis; CMP-3-deoxy-D-manno-octulosonate biosynthesis; CMP-3-deoxy-D-manno-octulosonate from 3-deoxy-D-manno-octulosonate and CTP: step 1/1. It participates in bacterial outer membrane biogenesis; lipopolysaccharide biosynthesis. Activates KDO (a required 8-carbon sugar) for incorporation into bacterial lipopolysaccharide in Gram-negative bacteria. This is 3-deoxy-manno-octulosonate cytidylyltransferase from Rickettsia prowazekii (strain Madrid E).